A 245-amino-acid chain; its full sequence is Carbohydrate deacetylase (245 aa).

Residues H59 and H125 each coordinate Mg(2+).

This sequence belongs to the YdjC deacetylase family. As to quaternary structure, homodimer. Mg(2+) serves as cofactor.

Probably catalyzes the deacetylation of acetylated carbohydrates an important step in the degradation of oligosaccharides. The polypeptide is Carbohydrate deacetylase (Listeria monocytogenes serotype 4a (strain HCC23)).